Here is a 309-residue protein sequence, read N- to C-terminus: Probable HTH-type transcriptional regulator LtrA (309 aa).

An HTH lysR-type domain is found at 1–61; that stretch reads MNLNLLPDLA…QRTTRKLRLS (61 aa). Positions 21–40 form a DNA-binding region, H-T-H motif; that stretch reads FSAVARQNGITPSAVSRSVS.

Belongs to the LysR transcriptional regulatory family.

The sequence is that of Probable HTH-type transcriptional regulator LtrA (ltrA) from Klebsiella pneumoniae.